The sequence spans 525 residues: MALDIHAHRILILDFGSQYTQLIARRVREIGVYCELHPFDMDDEAIREFAPKGVVLAGGPESVHEADSPRCPQAVFDLGVPVFGICYGMQTMAEQLGGKVAGSELREFGYARVDVVGKSRLLDGIEDHIDADGLFGLDVWMSHGDKVTKLPENFHILASTPSCPIAGMADDARGYYGVQFHPEVTHTKQGGRILSRFILDICGCEALWTPSKIAEDAIAQVRAQVGTDNVLLGLSGGVDSSVVAALLHKAIGDQLTCVFVDNGLLRLHEGEQVMAMFAENMGVKVIRANAEEQFLNNLAGESDPEKKRKIIGRTFIDVFDAESCKLDNIKYLAQGTIYPDVIESAGAKSGKAHVIKSHHNVGGLPEEMNLKLVEPLRELFKDEVRRLGLELGLPYDMVYRHPFPGPGLGVRILGEVKKEYADLLRRADHIFIEELRKADWYHKVSQAFVVFQPVKSVGVVGDGRRYAWVVALRAVETIDFMTARWAHLPYELLETVSGRIINEIEGISRVTYDVSSKPPATIEWE.

Positions arginine 9–leucine 207 constitute a Glutamine amidotransferase type-1 domain. Cysteine 86 (nucleophile) is an active-site residue. Residues histidine 181 and glutamate 183 contribute to the active site. The GMPS ATP-PPase domain occupies tryptophan 208–arginine 400. ATP is bound at residue serine 235 to serine 241.

Homodimer.

The enzyme catalyses XMP + L-glutamine + ATP + H2O = GMP + L-glutamate + AMP + diphosphate + 2 H(+). It functions in the pathway purine metabolism; GMP biosynthesis; GMP from XMP (L-Gln route): step 1/1. Catalyzes the synthesis of GMP from XMP. The polypeptide is GMP synthase [glutamine-hydrolyzing] (Pseudomonas syringae pv. syringae (strain B728a)).